Consider the following 180-residue polypeptide: uncharacterized protein (180 aa).

This is an uncharacterized protein from Methanocaldococcus jannaschii (strain ATCC 43067 / DSM 2661 / JAL-1 / JCM 10045 / NBRC 100440) (Methanococcus jannaschii).